Reading from the N-terminus, the 358-residue chain is scyllo-inositol 2-dehydrogenase (NADP(+)) IolW (358 aa).

This sequence belongs to the Gfo/Idh/MocA family.

It catalyses the reaction scyllo-inositol + NADP(+) = scyllo-inosose + NADPH + H(+). In terms of biological role, catalyzes the reversible NADPH-dependent reduction of scyllo-inosose (SIS) to scyllo-inositol (SI). Cannot use NADH instead of NADPH. May be involved in reduction of not only SIS but also various oxidized compounds manifested upon stressful conditions. The sequence is that of scyllo-inositol 2-dehydrogenase (NADP(+)) IolW from Bacillus subtilis (strain 168).